Here is a 569-residue protein sequence, read N- to C-terminus: BTB/POZ domain-containing protein At3g50840 (569 aa).

The BTB domain maps to 18–87; that stretch reads SDIEIEVDDI…SYGFKVDISV (70 aa). The NPH3 domain occupies 194–459; it reads ELWFEDLTEL…VQVLFLEQLQ (266 aa). Over residues 240 to 259 the composition is skewed to low complexity; sequence ISRSSSASSSSSSSSTTIAS. The disordered stretch occupies residues 240-261; sequence ISRSSSASSSSSSSSTTIASEN. Residue Y400 is modified to Phosphotyrosine.

The protein belongs to the NPH3 family.

Its pathway is protein modification; protein ubiquitination. May act as a substrate-specific adapter of an E3 ubiquitin-protein ligase complex (CUL3-RBX1-BTB) which mediates the ubiquitination and subsequent proteasomal degradation of target proteins. This is BTB/POZ domain-containing protein At3g50840 from Arabidopsis thaliana (Mouse-ear cress).